We begin with the raw amino-acid sequence, 441 residues long: Protein cortex (441 aa).

WD repeat units follow at residues 110-148 (SITS…VDQG), 149-187 (QTMF…QFVQ), 193-233 (IQIC…KSLV), 235-276 (IEGA…RFMK), 277-320 (TNEI…KLRQ), 345-379 (SLWS…ESHT), and 380-420 (GLNR…KILA). The short motif at 379 to 390 (TGLNRIRTMVFS) is the D-box element.

Belongs to the WD repeat CORT family.

The protein resides in the cytoplasm. Functionally, controls wing pigmentation patterning, possibly by regulating scale cell development. Probably acts as an activator of the anaphase promoting complex/cyclosome (APC/C) that promotes the ubiquitin ligase activity and substrate specificity of the APC/C. The protein is Protein cortex of Biston betularia (Pepper-and-salt geometer moth).